We begin with the raw amino-acid sequence, 134 residues long: uncharacterized protein (134 aa).

This is an uncharacterized protein from Bacillus subtilis (strain 168).